We begin with the raw amino-acid sequence, 196 residues long: Nodulation protein A (196 aa).

Belongs to the NodA family.

The protein resides in the cytoplasm. N-acyltransferase required for nodulation. Acts in the production of a small, heat-stable compound (Nod) that stimulates mitosis in various plant protoplasts. This is Nodulation protein A from Sinorhizobium terangae.